The following is a 201-amino-acid chain: NAD(P)H dehydrogenase (quinone) (201 aa).

Residues 4 to 191 form the Flavodoxin-like domain; that stretch reads VLVLYYSMYG…KIAKCQGVHV (188 aa). Residues 10–15 and 79–81 contribute to the FMN site; these read SMYGHV and TRF. Tyr-12 provides a ligand contact to NAD(+). Trp-99 provides a ligand contact to substrate. FMN contacts are provided by residues 114-120 and His-135; that span reads STGTQHG.

This sequence belongs to the WrbA family. FMN serves as cofactor.

The enzyme catalyses a quinone + NADH + H(+) = a quinol + NAD(+). It carries out the reaction a quinone + NADPH + H(+) = a quinol + NADP(+). The sequence is that of NAD(P)H dehydrogenase (quinone) from Hydrogenovibrio crunogenus (strain DSM 25203 / XCL-2) (Thiomicrospira crunogena).